Here is a 72-residue protein sequence, read N- to C-terminus: Large ribosomal subunit protein bL28 (72 aa).

This sequence belongs to the bacterial ribosomal protein bL28 family.

The chain is Large ribosomal subunit protein bL28 from Chlorobium phaeobacteroides (strain BS1).